Reading from the N-terminus, the 409-residue chain is Phospholipase ABHD3 (409 aa).

A helical; Signal-anchor for type II membrane protein membrane pass occupies residues 26–46 (GFFGSGVGLSLILGFSVAYAF). The region spanning 140 to 233 (PTILLLPGLT…MLLLNYLGKI (94 aa)) is the AB hydrolase-1 domain. Active-site charge relay system residues include Ser-220, Asp-346, and His-375.

The protein belongs to the AB hydrolase superfamily. AB hydrolase 4 family.

The protein localises to the membrane. It carries out the reaction a 1,2-diacyl-sn-glycero-3-phosphocholine + H2O = a 1-acyl-sn-glycero-3-phosphocholine + a fatty acid + H(+). The enzyme catalyses a 1,2-diacyl-sn-glycero-3-phosphocholine + H2O = a 2-acyl-sn-glycero-3-phosphocholine + a fatty acid + H(+). The catalysed reaction is 1-tetradecanoyl-2-(9Z,12Z-octadecadienoyl)-sn-glycero-3-phosphocholine + H2O = 2-(9Z,12Z-octadecadienoyl)-sn-glycero-3-phosphocholine + tetradecanoate + H(+). It catalyses the reaction 1-tetradecanoyl-2-(9Z,12Z-octadecadienoyl)-sn-glycero-3-phosphocholine + H2O = 1-tetradecanoyl-sn-glycero-3-phosphocholine + (9Z,12Z)-octadecadienoate + H(+). It carries out the reaction 1-tetradecanoyl-2-(5Z,8Z,11Z,14Z-eicosatetraenoyl)-sn-glycero-3-phosphocholine + H2O = 2-(5Z,8Z,11Z,14Z)-eicosatetraenoyl-sn-glycero-3-phosphocholine + tetradecanoate + H(+). The enzyme catalyses 1-tetradecanoyl-2-(4Z,7Z,10Z,13Z,16Z,19Z-docosahexaenoyl)-sn-glycero-3-phosphocholine + H2O = 2-(4Z,7Z,10Z,13Z,16Z,19Z-docosahexaenoyl)-sn-glycero-3-phosphocholine + tetradecanoate + H(+). The catalysed reaction is 1,2-ditetradecanoyl-sn-glycero-3-phosphocholine + H2O = 2-tetradecanoyl-sn-glycero-3-phosphocholine + tetradecanoate + H(+). It catalyses the reaction 1-octadecanoyl-2-acetyl-sn-glycero-3-phosphocholine + H2O = 1-octadecanoyl-sn-glycero-3-phosphocholine + acetate + H(+). It carries out the reaction 1,2-ditetradecanoyl-sn-glycero-3-phosphocholine + H2O = 1-tetradecanoyl-sn-glycero-3-phosphocholine + tetradecanoate + H(+). The enzyme catalyses 1-octadecanoyl-2-pentanoyl-sn-glycero-3-phosphocholine + H2O = pentanoate + 1-octadecanoyl-sn-glycero-3-phosphocholine + H(+). The catalysed reaction is 1-octadecanoyl-2-hexanoyl-sn-glycero-3-phosphocholine + H2O = hexanoate + 1-octadecanoyl-sn-glycero-3-phosphocholine + H(+). It catalyses the reaction 1-octadecanoyl-2-octanoyl-sn-glycero-3-phosphocholine + H2O = 1-octadecanoyl-sn-glycero-3-phosphocholine + octanoate + H(+). It carries out the reaction 1-octadecanoyl-2-nonanoyl-sn-glycero-3-phosphocholine + H2O = nonanoate + 1-octadecanoyl-sn-glycero-3-phosphocholine + H(+). The enzyme catalyses 1-O-hexadecyl-2-nonadioyl-sn-glycero-3-phosphocholine + H2O = nonanedioate + 1-O-hexadecyl-sn-glycero-3-phosphocholine + H(+). The catalysed reaction is 1-hexadecanoyl-2-nonadioyl-sn-glycero-3-phosphocholine + H2O = nonanedioate + 1-hexadecanoyl-sn-glycero-3-phosphocholine + H(+). It catalyses the reaction 1-hexadecanoyl-2-(9-oxononanoyl)-sn-glycero-3-phosphocholine + H2O = 9-oxononanoate + 1-hexadecanoyl-sn-glycero-3-phosphocholine + H(+). It carries out the reaction 1-hexadecanoyl-2-(5-oxopentanoyl)-sn-glycero-3-phosphocholine + H2O = 5-oxopentanoate + 1-hexadecanoyl-sn-glycero-3-phosphocholine + H(+). The enzyme catalyses 1-hexadecanoyl-2-glutaroyl-sn-glycero-3-phosphocholine + H2O = glutarate + 1-hexadecanoyl-sn-glycero-3-phosphocholine + H(+). The catalysed reaction is 1-O-hexadecyl-2-acetyl-sn-glycero-3-phosphocholine + H2O = 1-O-hexadecyl-sn-glycero-3-phosphocholine + acetate + H(+). Its function is as follows. Phospholipase that may play a role in phospholipids remodeling. May selectively cleave myristate (C14)-containing phosphatidylcholines through its predominant phospholipase 1 activity, cleaving preferentially acyl groups in sn1 position. In parallel, may have a minor phospholipase 2 activity acting on acyl groups in position sn2. In addition to (C14)-containing phosphatidylcholines, may also act on other medium-chain-containing and oxidatively truncated phospholipids. This Homo sapiens (Human) protein is Phospholipase ABHD3.